Here is a 330-residue protein sequence, read N- to C-terminus: tRNA(Ile)-lysidine synthase (330 aa).

An ATP-binding site is contributed by 31–36 (SGGQDS).

The protein belongs to the tRNA(Ile)-lysidine synthase family.

The protein resides in the cytoplasm. The catalysed reaction is cytidine(34) in tRNA(Ile2) + L-lysine + ATP = lysidine(34) in tRNA(Ile2) + AMP + diphosphate + H(+). Its function is as follows. Ligates lysine onto the cytidine present at position 34 of the AUA codon-specific tRNA(Ile) that contains the anticodon CAU, in an ATP-dependent manner. Cytidine is converted to lysidine, thus changing the amino acid specificity of the tRNA from methionine to isoleucine. The protein is tRNA(Ile)-lysidine synthase of Synechocystis sp. (strain ATCC 27184 / PCC 6803 / Kazusa).